Consider the following 946-residue polypeptide: Clumping factor A (946 aa).

The first 39 residues, 1–39 (MNMKKKEKHAIRKKSIGVASVLVGTLIGFGLLSSKEADA), serve as a signal peptide directing secretion. Residues 9–20 (HAIRKKSIGVAS) carry the YSIRK-G/S signaling motif motif. Disordered regions lie at residues 34 to 199 (SKEA…SNKD) and 528 to 917 (FNNG…SEDE). A ligand binding A region region spans residues 40-542 (SENSVTQSDS…GSGDGIDKPV (503 aa)). Positions 47-65 (SDSASNESKSNDSSSVSAA) are enriched in low complexity. Residues 71 to 111 (TNVSDTKTSSNTNNGETSVAQNPAQQETTQSALTNATTEET) are compositionally biased toward polar residues. Composition is skewed to low complexity over residues 117 to 131 (ATTA…ATTQ) and 142 to 161 (NQTS…SVNS). A compositionally biased stretch (polar residues) spans 162-199 (PQNSTNAENVSTTQDTSTEATPSNNESAPQSTDASNKD). Residues 546–564 (QPDEPGEIEPIPEDSDSDP) show a composition bias toward acidic residues. Positions 565 to 597 (GSDSGSDSNSDSGSDSGSDSTSDSGSDSASDSD) are enriched in low complexity. The segment covering 598–874 (SASDSDSASD…DSDSESDSNS (277 aa)) has biased composition (acidic residues). Over residues 875–893 (DSESGSNNNVVPPNSPKNG) the composition is skewed to low complexity. Residues 900–909 (NEAKDSKEPL) are compositionally biased toward basic and acidic residues. The short motif at 909–913 (LPDTG) is the LPXTG sorting signal element. Thr-912 is modified (pentaglycyl murein peptidoglycan amidated threonine). The propeptide at 913–946 (GSEDEANTSLIWGLLASIGSLLLFRRKKENKDKK) is removed by sortase.

The protein belongs to the serine-aspartate repeat-containing protein (SDr) family.

It is found in the secreted. Its subcellular location is the cell wall. Functionally, cell surface-associated protein implicated in virulence. Promotes bacterial attachment exclusively to the gamma-chain of human fibrinogen. Induces formation of bacterial clumps. The polypeptide is Clumping factor A (clfA) (Staphylococcus aureus (strain MW2)).